Consider the following 146-residue polypeptide: Large ribosomal subunit protein uL22 (146 aa).

Belongs to the universal ribosomal protein uL22 family. Part of the 50S ribosomal subunit.

This protein binds specifically to 23S rRNA; its binding is stimulated by other ribosomal proteins, e.g. L4, L17, and L20. It is important during the early stages of 50S assembly. It makes multiple contacts with different domains of the 23S rRNA in the assembled 50S subunit and ribosome. Its function is as follows. The globular domain of the protein is located near the polypeptide exit tunnel on the outside of the subunit, while an extended beta-hairpin is found that lines the wall of the exit tunnel in the center of the 70S ribosome. This Nocardioides sp. (strain ATCC BAA-499 / JS614) protein is Large ribosomal subunit protein uL22.